A 478-amino-acid chain; its full sequence is MIQVLLVTICLAAFPYQGSSIILESGNVNDYEIVYPRKVTALPKGAVQPKYEDTMQYELKVNGEPVVLHLEKNKGLFSKDYSETHYSPDGRKITTNPPVEDHCYYHGRIQNDADSTASISACNGLKGHFKLQGEMYLIEPLKLSDSEAHAVFKYEHIEKEDEDPKMCGVTETNWESYEPIKKASPLVVTTYQRYVELVVVADHRMVTKYNGNLIIIRTWVYEIFNTINEIYQRMNIHVALVGLEIWSNGDKIIVQSSADVTLDLFGTWGEIDLLKRKSHDNAQLLTPTDFDGPTIGLAYVGTMCDPKRSTGVVQDFSPINLLVAVTMAHEIGHNLGMNHDENYCSCGGFACIMSPVISPQPSKLFSYCSYIHYWTYINYRNPQCILNKPLRTDIVSTPVSGNELLEAGEECDCDSPGNPCCDAATCKLRPGAQCAEGLCCEQCRFMKEGTVCRIARGDDMDDYCNGISAGCPRNPFHA.

Residues 1-20 (MIQVLLVTICLAAFPYQGSS) form the signal peptide. The propeptide occupies 21-190 (IILESGNVND…KKASPLVVTT (170 aa)). The region spanning 193-389 (RYVELVVVAD…RNPQCILNKP (197 aa)) is the Peptidase M12B domain. The Ca(2+) site is built by E196 and D280. 3 disulfides stabilise this stretch: C304–C384, C344–C368, and C346–C351. H329 lines the Zn(2+) pocket. E330 is an active-site residue. Residues H333 and H339 each coordinate Zn(2+). C384 and N387 together coordinate Ca(2+). A propeptide spanning residues 390-413 (LRTDIVSTPVSGNELLEAGEECDC) is cleaved from the precursor. The Disintegrin domain maps to 397–478 (TPVSGNELLE…AGCPRNPFHA (82 aa)). Cystine bridges form between C411-C426, C413-C421, C420-C443, C434-C440, C439-C464, and C452-C471. The Cell attachment site motif lies at 456–458 (RGD).

This sequence belongs to the venom metalloproteinase (M12B) family. P-II subfamily. P-IIa sub-subfamily. Monomer. Zn(2+) serves as cofactor. In terms of tissue distribution, expressed by the venom gland.

The protein localises to the secreted. Its function is as follows. Impairs hemostasis in the envenomed animal. Functionally, inhibits platelet aggregation induced by ADP, thrombin, platelet-activating factor and collagen. Acts by inhibiting fibrinogen interaction with platelet receptors GPIIb/GPIIIa (ITGA2B/ITGB3). The protein is Zinc metalloproteinase/disintegrin ussurin of Gloydius ussuriensis (Ussuri mamushi).